The chain runs to 153 residues: MHGREAIEAHYRVAGARMAGLPVYNPALTVELLGWRAVEGVGALGVLITPWCMNLFWQPPADAELPASGERAVLSLPSGDYECTLHEDERLGRHASASLCSPMQDFPGQAEARAMAGEVLRLILAVPEAGPEPSRSGLLSRRALFRRALGGAS.

It belongs to the HupJ family.

This Azotobacter vinelandii protein is Hydrogenase expression/formation protein HoxT (hoxT).